The sequence spans 343 residues: Ion-translocating oxidoreductase complex subunit D (343 aa).

4 helical membrane passes run 24–44 (VLLA…AGTL), 45–65 (YNLA…LAAR), 69–91 (LAFF…ALPP), and 124–144 (AMLG…SWPA). Thr171 carries the post-translational modification FMN phosphoryl threonine. The next 5 helical transmembrane spans lie at 197–217 (FGGA…LYLL), 221–241 (LITW…SLLF), 251–271 (GSPL…FIVT), 284–304 (LVFG…GGYP), and 305–325 (DAVA…DYYT).

It belongs to the NqrB/RnfD family. The complex is composed of six subunits: RnfA, RnfB, RnfC, RnfD, RnfE and RnfG. FMN serves as cofactor.

Its subcellular location is the cell inner membrane. Functionally, part of a membrane-bound complex that couples electron transfer with translocation of ions across the membrane. This is Ion-translocating oxidoreductase complex subunit D from Ectopseudomonas mendocina (strain ymp) (Pseudomonas mendocina).